The following is a 279-amino-acid chain: Ribosomal RNA small subunit methyltransferase A (279 aa).

6 residues coordinate S-adenosyl-L-methionine: His-12, Leu-14, Gly-39, Glu-60, Asp-81, and Asn-118.

The protein belongs to the class I-like SAM-binding methyltransferase superfamily. rRNA adenine N(6)-methyltransferase family. RsmA subfamily.

Its subcellular location is the cytoplasm. The enzyme catalyses adenosine(1518)/adenosine(1519) in 16S rRNA + 4 S-adenosyl-L-methionine = N(6)-dimethyladenosine(1518)/N(6)-dimethyladenosine(1519) in 16S rRNA + 4 S-adenosyl-L-homocysteine + 4 H(+). Its function is as follows. Specifically dimethylates two adjacent adenosines (A1518 and A1519) in the loop of a conserved hairpin near the 3'-end of 16S rRNA in the 30S particle. May play a critical role in biogenesis of 30S subunits. This is Ribosomal RNA small subunit methyltransferase A from Polaromonas naphthalenivorans (strain CJ2).